Consider the following 88-residue polypeptide: Small ribosomal subunit protein bS18 (88 aa).

The interval 1-22 (MSTKNAKPKKEAQRRPSRKAKV) is disordered.

This sequence belongs to the bacterial ribosomal protein bS18 family. As to quaternary structure, part of the 30S ribosomal subunit. Forms a tight heterodimer with protein bS6.

Its function is as follows. Binds as a heterodimer with protein bS6 to the central domain of the 16S rRNA, where it helps stabilize the platform of the 30S subunit. This chain is Small ribosomal subunit protein bS18 (rpsR), found in Thermus thermophilus.